An 869-amino-acid chain; its full sequence is Bifunctional uridylyltransferase/uridylyl-removing enzyme (869 aa).

Positions 1 to 332 are uridylyltransferase; sequence MTDTPAERPD…QFDGEATPEP (332 aa). The interval 333 to 691 is uridylyl-removing; it reads LGGGFSLRRG…RRAVPDNDAL (359 aa). Residues 450 to 572 enclose the HD domain; it reads VDQHTLMVLR…VGTRERLDYL (123 aa). ACT domains follow at residues 692–774 and 798–869; these read EVFV…RAVP and RISL…LDPV.

This sequence belongs to the GlnD family. The cofactor is Mg(2+).

The enzyme catalyses [protein-PII]-L-tyrosine + UTP = [protein-PII]-uridylyl-L-tyrosine + diphosphate. It catalyses the reaction [protein-PII]-uridylyl-L-tyrosine + H2O = [protein-PII]-L-tyrosine + UMP + H(+). Its activity is regulated as follows. Uridylyltransferase (UTase) activity is inhibited by glutamine, while glutamine activates uridylyl-removing (UR) activity. In terms of biological role, modifies, by uridylylation and deuridylylation, the PII regulatory proteins (GlnB and homologs), in response to the nitrogen status of the cell that GlnD senses through the glutamine level. Under low glutamine levels, catalyzes the conversion of the PII proteins and UTP to PII-UMP and PPi, while under higher glutamine levels, GlnD hydrolyzes PII-UMP to PII and UMP (deuridylylation). Thus, controls uridylylation state and activity of the PII proteins, and plays an important role in the regulation of nitrogen assimilation and metabolism. In Xanthomonas euvesicatoria pv. vesicatoria (strain 85-10) (Xanthomonas campestris pv. vesicatoria), this protein is Bifunctional uridylyltransferase/uridylyl-removing enzyme.